The chain runs to 135 residues: UPF0738 protein Aflv_2116 (135 aa).

It belongs to the UPF0738 family.

The protein is UPF0738 protein Aflv_2116 of Anoxybacillus flavithermus (strain DSM 21510 / WK1).